The chain runs to 352 residues: Holliday junction branch migration complex subunit RuvB (352 aa).

Residues 13–201 (FSFRKKELRL…FGISQKIEFY (189 aa)) are large ATPase domain (RuvB-L). ATP contacts are provided by residues Arg-41, Gly-82, Lys-85, Thr-86, Thr-87, 148 to 150 (EDF), Arg-191, Tyr-201, and Arg-238. Thr-86 provides a ligand contact to Mg(2+). The segment at 202–273 (TCDELKQIIV…LIKKALNSYQ (72 aa)) is small ATPAse domain (RuvB-S). The head domain (RuvB-H) stretch occupies residues 276–352 (EKGLDSLDRH…KYIDSKDDNF (77 aa)). DNA-binding residues include Arg-330 and Arg-335.

Belongs to the RuvB family. Homohexamer. Forms an RuvA(8)-RuvB(12)-Holliday junction (HJ) complex. HJ DNA is sandwiched between 2 RuvA tetramers; dsDNA enters through RuvA and exits via RuvB. An RuvB hexamer assembles on each DNA strand where it exits the tetramer. Each RuvB hexamer is contacted by two RuvA subunits (via domain III) on 2 adjacent RuvB subunits; this complex drives branch migration. In the full resolvosome a probable DNA-RuvA(4)-RuvB(12)-RuvC(2) complex forms which resolves the HJ.

It is found in the cytoplasm. The enzyme catalyses ATP + H2O = ADP + phosphate + H(+). The RuvA-RuvB-RuvC complex processes Holliday junction (HJ) DNA during genetic recombination and DNA repair, while the RuvA-RuvB complex plays an important role in the rescue of blocked DNA replication forks via replication fork reversal (RFR). RuvA specifically binds to HJ cruciform DNA, conferring on it an open structure. The RuvB hexamer acts as an ATP-dependent pump, pulling dsDNA into and through the RuvAB complex. RuvB forms 2 homohexamers on either side of HJ DNA bound by 1 or 2 RuvA tetramers; 4 subunits per hexamer contact DNA at a time. Coordinated motions by a converter formed by DNA-disengaged RuvB subunits stimulates ATP hydrolysis and nucleotide exchange. Immobilization of the converter enables RuvB to convert the ATP-contained energy into a lever motion, pulling 2 nucleotides of DNA out of the RuvA tetramer per ATP hydrolyzed, thus driving DNA branch migration. The RuvB motors rotate together with the DNA substrate, which together with the progressing nucleotide cycle form the mechanistic basis for DNA recombination by continuous HJ branch migration. Branch migration allows RuvC to scan DNA until it finds its consensus sequence, where it cleaves and resolves cruciform DNA. The polypeptide is Holliday junction branch migration complex subunit RuvB (Prochlorococcus marinus (strain AS9601)).